Consider the following 142-residue polypeptide: PDZ domain-containing protein 11 (142 aa).

Residues 49–131 (TIVLKKPPGA…ILMKVRYFPY (83 aa)) form the PDZ domain.

The protein resides in the cytoplasm. This Danio rerio (Zebrafish) protein is PDZ domain-containing protein 11 (pdzd11).